Consider the following 434-residue polypeptide: F-box/LRR-repeat protein 21 (434 aa).

The F-box domain maps to 39–85; it reads LLDWGTLPHHVILQIFQYLPLIDRARASSVCRRWNEVFHIPDLWRKF. LRR repeat units follow at residues 187 to 213, 214 to 239, 242 to 265, 322 to 347, 349 to 374, and 375 to 400; these read DTPVDDPSLKILVANNSDTLRLLKMSS, CPHVSSDGILCVADHCQGLRELALNY, LSDEILLALSSETHVNLEHLRIDV, GRSVSRAILGRIGLNCPRLIELVVCA, GLLPLDSELIRIAKHCKNLTSLGLSE, and CEVSCSAFVEFVRLCGRRLTQLSIME.

Part of the SCF (SKP1-CUL1-F-box) E3 ubiquitin-protein ligase complex SCF(FBXL21) composed of CUL1, SKP1, RBX1 and FBXL21. Interacts with CRY1 and CRY2. As to expression, expressed in the hypothalamus, especially in the suprachiasmatic nucleus (SCN). Expression is driven by the core-clock. There is a pronounced diurnal and circadian expression rhythms rising rapidly at the start of the day and declining at the onset of the night.

The protein resides in the cytoplasm. It localises to the cytosol. The protein localises to the nucleus. It participates in protein modification; protein ubiquitination. Substrate-recognition component of the SCF(FBXL21) E3 ubiquitin ligase complex involved in circadian rhythm function. Plays a key role in the maintenance of both the speed and the robustness of the circadian clock oscillation. The SCF(FBXL21) complex mainly acts in the cytosol and mediates ubiquitination of CRY proteins (CRY1 and CRY2), leading to CRY proteins stabilization. The SCF(FBXL21) complex counteracts the activity of the SCF(FBXL3) complex and protects CRY proteins from degradation. Involved in the hypothalamic suprachiasmatic nucleus (SCN) clock regulating temporal organization of the daily activities. This Mus musculus (Mouse) protein is F-box/LRR-repeat protein 21 (Fbxl21).